A 168-amino-acid chain; its full sequence is Disulfide bond formation protein B (168 aa).

Over Met-1–Val-13 the chain is Cytoplasmic. The helical transmembrane segment at Leu-14–Tyr-30 threads the bilayer. Residues Leu-31–Tyr-48 lie on the Periplasmic side of the membrane. The cysteines at positions 40 and 43 are disulfide-linked. A helical transmembrane segment spans residues Ala-49–Lys-64. The Cytoplasmic segment spans residues Ser-65–Ile-70. Residues Thr-71–Ala-88 traverse the membrane as a helical segment. The Periplasmic portion of the chain corresponds to Arg-89–Asn-144. A disulfide bridge connects residues Cys-103 and Cys-130. The helical transmembrane segment at Trp-145 to Arg-163 threads the bilayer. The Cytoplasmic portion of the chain corresponds to Leu-164–Arg-168.

The protein belongs to the DsbB family.

The protein localises to the cell inner membrane. Functionally, required for disulfide bond formation in some periplasmic proteins. Acts by oxidizing the DsbA protein. The protein is Disulfide bond formation protein B of Polaromonas sp. (strain JS666 / ATCC BAA-500).